Consider the following 203-residue polypeptide: Ribonuclease HII (203 aa).

Residues 18–203 (GQYAGVDEVG…SFRPVREALA (186 aa)) form the RNase H type-2 domain. Asp24, Glu25, and Asp116 together coordinate a divalent metal cation.

The protein belongs to the RNase HII family. It depends on Mn(2+) as a cofactor. Requires Mg(2+) as cofactor.

Its subcellular location is the cytoplasm. It catalyses the reaction Endonucleolytic cleavage to 5'-phosphomonoester.. Endonuclease that specifically degrades the RNA of RNA-DNA hybrids. This Shewanella pealeana (strain ATCC 700345 / ANG-SQ1) protein is Ribonuclease HII.